Reading from the N-terminus, the 161-residue chain is Disulfide bond formation protein B (161 aa).

Residues 1–8 (MQANSRAY) lie on the Cytoplasmic side of the membrane. Residues 9 to 25 (FLLIAFISFGLVGFALY) traverse the membrane as a helical segment. The Periplasmic portion of the chain corresponds to 26–43 (LQFEKGYQPCPLCIMQRF). Cys35 and Cys38 are disulfide-bonded. The helical transmembrane segment at 44 to 58 (AFIGIGLFSLLAVIA) threads the bilayer. The Cytoplasmic portion of the chain corresponds to 59–63 (QNTRS). Residues 64–81 (LWQGLGMLSGVGGIAVAV) traverse the membrane as a helical segment. Topologically, residues 82-136 (YHVSLLLNPKASCGIDPLENWVNALPTAKVLPQVFYSDGLCTAPLPPVLGLSVPA) are periplasmic. A disulfide bridge links Cys94 with Cys122. A helical membrane pass occupies residues 137–155 (WSLIWLFILTLTLAVGLIR). The Cytoplasmic segment spans residues 156 to 161 (REKNFR).

It belongs to the DsbB family.

Its subcellular location is the cell inner membrane. Its function is as follows. Required for disulfide bond formation in some periplasmic proteins. Acts by oxidizing the DsbA protein. This is Disulfide bond formation protein B from Cupriavidus pinatubonensis (strain JMP 134 / LMG 1197) (Cupriavidus necator (strain JMP 134)).